The following is a 229-amino-acid chain: Urease accessory protein UreF (229 aa).

This sequence belongs to the UreF family. In terms of assembly, ureD, UreF and UreG form a complex that acts as a GTP-hydrolysis-dependent molecular chaperone, activating the urease apoprotein by helping to assemble the nickel containing metallocenter of UreC. The UreE protein probably delivers the nickel.

Its subcellular location is the cytoplasm. Functionally, required for maturation of urease via the functional incorporation of the urease nickel metallocenter. This chain is Urease accessory protein UreF, found in Alcanivorax borkumensis (strain ATCC 700651 / DSM 11573 / NCIMB 13689 / SK2).